Reading from the N-terminus, the 466-residue chain is Collagenase 3 (466 aa).

An N-terminal signal peptide occupies residues 1-13 (ATFFLLSWTHCWS). A propeptide spans 14 to 98 (LPLPYGDDDD…PRCGVPDVGV (85 aa)) (activation peptide). The short motif at 89-96 (PRCGVPDV) is the Cysteine switch element. Zn(2+) is bound at residue Cys91. N-linked (GlcNAc...) asparagine glycosylation occurs at Asn112. Residue Asp123 coordinates Ca(2+). Asn147 is a glycosylation site (N-linked (GlcNAc...) asparagine). Ca(2+) is bound at residue Asp157. Residues His167 and Asp169 each coordinate Zn(2+). Residues 171-241 (YPFDGPSGLL…GALMFPIYTY (71 aa)) are interaction with TIMP2. 4 residues coordinate Ca(2+): Asp174, Gly175, Ser177, and Leu179. Residue His182 coordinates Zn(2+). Ca(2+) contacts are provided by Asn189, Gly191, and Asp193. Position 195 (His195) interacts with Zn(2+). Positions 197, 198, and 200 each coordinate Ca(2+). A Zn(2+)-binding site is contributed by His217. The active site involves Glu218. His221, His227, and Met235 together coordinate Zn(2+). The interval 258-279 (QSLYGPGDEDPNPKHPKTPEKC) is disordered. Positions 263–466 (PGDEDPNPKH…VMPTNSLLWC (204 aa)) are interaction with collagen. Residues 268-279 (PNPKHPKTPEKC) show a composition bias toward basic and acidic residues. Hemopexin repeat units follow at residues 276–325 (PEKC…WPEL), 326–372 (PNHV…GFPK), 374–422 (VKRL…FPGI), and 423–466 (GDKV…LLWC). Residues Cys279 and Cys466 are joined by a disulfide bond. Positions 286, 288, 330, and 332 each coordinate Ca(2+). The residue at position 361 (Tyr361) is a Phosphotyrosine; by PKDCC. 2 residues coordinate Ca(2+): Ser378 and Ala380. The N-linked (GlcNAc...) asparagine glycan is linked to Asn404. The Ca(2+) site is built by Asp427 and Val429.

It belongs to the peptidase M10A family. Requires Ca(2+) as cofactor. It depends on Zn(2+) as a cofactor. Post-translationally, the proenzyme is activated by removal of the propeptide; this cleavage can be effected by other matrix metalloproteinases, such as MMP2, MMP3 and MMP14 and may involve several cleavage steps. Cleavage can also be autocatalytic, after partial maturation by another protease or after treatment with 4-aminophenylmercuric acetate (APMA) (in vitro). In terms of processing, N-glycosylated. Tyrosine phosphorylated by PKDCC/VLK.

Its subcellular location is the secreted. It localises to the extracellular space. It is found in the extracellular matrix. Functionally, plays a role in the degradation of extracellular matrix proteins including fibrillar collagen, fibronectin, TNC and ACAN. Cleaves triple helical collagens, including type I, type II and type III collagen, but has the highest activity with soluble type II collagen. Can also degrade collagen type IV, type XIV and type X. May also function by activating or degrading key regulatory proteins, such as TGFB1 and CCN2. Plays a role in wound healing, tissue remodeling, cartilage degradation, bone development, bone mineralization and ossification. Required for normal embryonic bone development and ossification. Plays a role in the healing of bone fractures via endochondral ossification. Plays a role in wound healing, probably by a mechanism that involves proteolytic activation of TGFB1 and degradation of CCN2. Plays a role in keratinocyte migration during wound healing. May play a role in cell migration and in tumor cell invasion. The polypeptide is Collagenase 3 (Mmp13) (Rattus norvegicus (Rat)).